We begin with the raw amino-acid sequence, 347 residues long: S-adenosylmethionine:tRNA ribosyltransferase-isomerase (347 aa).

It belongs to the QueA family. In terms of assembly, monomer.

The protein resides in the cytoplasm. It carries out the reaction 7-aminomethyl-7-carbaguanosine(34) in tRNA + S-adenosyl-L-methionine = epoxyqueuosine(34) in tRNA + adenine + L-methionine + 2 H(+). Its pathway is tRNA modification; tRNA-queuosine biosynthesis. Transfers and isomerizes the ribose moiety from AdoMet to the 7-aminomethyl group of 7-deazaguanine (preQ1-tRNA) to give epoxyqueuosine (oQ-tRNA). The protein is S-adenosylmethionine:tRNA ribosyltransferase-isomerase of Pseudomonas aeruginosa (strain LESB58).